The primary structure comprises 242 residues: Glucosamine-6-phosphate deaminase (242 aa).

Aspartate 67 (proton acceptor; for enolization step) is an active-site residue. The active-site For ring-opening step is the asparagine 136. The active-site Proton acceptor; for ring-opening step is the histidine 138. Glutamate 143 acts as the For ring-opening step in catalysis.

Belongs to the glucosamine/galactosamine-6-phosphate isomerase family. NagB subfamily.

It carries out the reaction alpha-D-glucosamine 6-phosphate + H2O = beta-D-fructose 6-phosphate + NH4(+). It functions in the pathway amino-sugar metabolism; N-acetylneuraminate degradation; D-fructose 6-phosphate from N-acetylneuraminate: step 5/5. Catalyzes the reversible isomerization-deamination of glucosamine 6-phosphate (GlcN6P) to form fructose 6-phosphate (Fru6P) and ammonium ion. The sequence is that of Glucosamine-6-phosphate deaminase from Clostridium perfringens (strain 13 / Type A).